The following is a 374-amino-acid chain: Ribosomal RNA large subunit methyltransferase G (374 aa).

This sequence belongs to the methyltransferase superfamily. RlmG family.

It is found in the cytoplasm. The catalysed reaction is guanosine(1835) in 23S rRNA + S-adenosyl-L-methionine = N(2)-methylguanosine(1835) in 23S rRNA + S-adenosyl-L-homocysteine + H(+). Functionally, specifically methylates the guanine in position 1835 (m2G1835) of 23S rRNA. This is Ribosomal RNA large subunit methyltransferase G from Pseudomonas putida (strain ATCC 47054 / DSM 6125 / CFBP 8728 / NCIMB 11950 / KT2440).